The sequence spans 303 residues: Probable cell division protein WhiA (303 aa).

Residues 272–303 constitute a DNA-binding region (H-T-H motif); sequence SIQQLADSLSTPLTKSGVNHRLRKINKIADEL.

Belongs to the WhiA family.

In terms of biological role, involved in cell division and chromosome segregation. The chain is Probable cell division protein WhiA from Streptococcus pneumoniae (strain ATCC 700669 / Spain 23F-1).